The sequence spans 206 residues: Large ribosomal subunit protein uL4 (206 aa).

The segment at 46-77 (GTRAQKDREQVKHSTKKPFKQKGTGRARAGMT) is disordered. Residues 58–70 (HSTKKPFKQKGTG) are compositionally biased toward basic residues.

The protein belongs to the universal ribosomal protein uL4 family. As to quaternary structure, part of the 50S ribosomal subunit.

In terms of biological role, one of the primary rRNA binding proteins, this protein initially binds near the 5'-end of the 23S rRNA. It is important during the early stages of 50S assembly. It makes multiple contacts with different domains of the 23S rRNA in the assembled 50S subunit and ribosome. Forms part of the polypeptide exit tunnel. This chain is Large ribosomal subunit protein uL4, found in Albidiferax ferrireducens (strain ATCC BAA-621 / DSM 15236 / T118) (Rhodoferax ferrireducens).